The sequence spans 508 residues: Light-independent protochlorophyllide reductase subunit B (508 aa).

A [4Fe-4S] cluster-binding site is contributed by aspartate 36. The Proton donor role is filled by aspartate 294. Residue 429 to 430 coordinates substrate; the sequence is GM.

It belongs to the ChlB/BchB/BchZ family. As to quaternary structure, protochlorophyllide reductase is composed of three subunits; ChlL, ChlN and ChlB. Forms a heterotetramer of two ChlB and two ChlN subunits. [4Fe-4S] cluster serves as cofactor.

The enzyme catalyses chlorophyllide a + oxidized 2[4Fe-4S]-[ferredoxin] + 2 ADP + 2 phosphate = protochlorophyllide a + reduced 2[4Fe-4S]-[ferredoxin] + 2 ATP + 2 H2O. The protein operates within porphyrin-containing compound metabolism; chlorophyll biosynthesis (light-independent). In terms of biological role, component of the dark-operative protochlorophyllide reductase (DPOR) that uses Mg-ATP and reduced ferredoxin to reduce ring D of protochlorophyllide (Pchlide) to form chlorophyllide a (Chlide). This reaction is light-independent. The NB-protein (ChlN-ChlB) is the catalytic component of the complex. The polypeptide is Light-independent protochlorophyllide reductase subunit B (Synechococcus elongatus (strain ATCC 33912 / PCC 7942 / FACHB-805) (Anacystis nidulans R2)).